The following is a 158-amino-acid chain: Small ribosomal subunit protein uS9 (158 aa).

Belongs to the universal ribosomal protein uS9 family.

This chain is Small ribosomal subunit protein uS9, found in Rhodopseudomonas palustris (strain BisA53).